We begin with the raw amino-acid sequence, 189 residues long: GTP cyclohydrolase 1 (189 aa).

Zn(2+) is bound by residues C78, H81, and C150.

Belongs to the GTP cyclohydrolase I family. Homomer.

The enzyme catalyses GTP + H2O = 7,8-dihydroneopterin 3'-triphosphate + formate + H(+). It participates in cofactor biosynthesis; 7,8-dihydroneopterin triphosphate biosynthesis; 7,8-dihydroneopterin triphosphate from GTP: step 1/1. This Bacillus mycoides (strain KBAB4) (Bacillus weihenstephanensis) protein is GTP cyclohydrolase 1.